The following is a 269-amino-acid chain: uncharacterized protein (269 aa).

103 to 110 contributes to the ATP binding site; that stretch reads GIFTMGKS.

This is an uncharacterized protein from Mycoplasma pneumoniae (strain ATCC 29342 / M129 / Subtype 1) (Mycoplasmoides pneumoniae).